Reading from the N-terminus, the 176-residue chain is NAD(P)H-quinone oxidoreductase subunit 6, chloroplastic (176 aa).

5 consecutive transmembrane segments (helical) span residues 10 to 30, 32 to 52, 61 to 81, 92 to 112, and 152 to 172; these read FLLVFLGLGLILGGLGVVLLA, PIYSAFSLGLVFVCISLFYIL, AQLLIYVGAINVLIIFAVMFI, LWTVGDGVTSVVCTSLFVSLI, and FFIPFEFISIILLVALIGAIA.

The protein belongs to the complex I subunit 6 family. In terms of assembly, NDH is composed of at least 16 different subunits, 5 of which are encoded in the nucleus.

The protein resides in the plastid. The protein localises to the chloroplast thylakoid membrane. The catalysed reaction is a plastoquinone + NADH + (n+1) H(+)(in) = a plastoquinol + NAD(+) + n H(+)(out). It catalyses the reaction a plastoquinone + NADPH + (n+1) H(+)(in) = a plastoquinol + NADP(+) + n H(+)(out). Its function is as follows. NDH shuttles electrons from NAD(P)H:plastoquinone, via FMN and iron-sulfur (Fe-S) centers, to quinones in the photosynthetic chain and possibly in a chloroplast respiratory chain. The immediate electron acceptor for the enzyme in this species is believed to be plastoquinone. Couples the redox reaction to proton translocation, and thus conserves the redox energy in a proton gradient. This chain is NAD(P)H-quinone oxidoreductase subunit 6, chloroplastic (ndhG), found in Helianthus annuus (Common sunflower).